Here is a 307-residue protein sequence, read N- to C-terminus: Porphobilinogen deaminase (307 aa).

Cysteine 241 carries the S-(dipyrrolylmethanemethyl)cysteine modification.

The protein belongs to the HMBS family. In terms of assembly, monomer. Dipyrromethane is required as a cofactor.

The enzyme catalyses 4 porphobilinogen + H2O = hydroxymethylbilane + 4 NH4(+). Its pathway is porphyrin-containing compound metabolism; protoporphyrin-IX biosynthesis; coproporphyrinogen-III from 5-aminolevulinate: step 2/4. Tetrapolymerization of the monopyrrole PBG into the hydroxymethylbilane pre-uroporphyrinogen in several discrete steps. In Macrococcus caseolyticus (strain JCSC5402) (Macrococcoides caseolyticum), this protein is Porphobilinogen deaminase.